A 433-amino-acid chain; its full sequence is PBSX phage terminase large subunit (433 aa).

This sequence to B.subtilis YqaT and phage SPP1 terminase large subunit. Dimer of a small and a large subunit.

In terms of biological role, functions as a terminase. The polypeptide is PBSX phage terminase large subunit (xtmB) (Bacillus subtilis (strain 168)).